The chain runs to 782 residues: Gelsolin (782 aa).

The first 27 residues, 1 to 27, serve as a signal peptide directing secretion; the sequence is MAPHRPAPALLCALSLALCALSLPVRA. The tract at residues 53–176 is actin-severing; that stretch reads VVEHPEFLKA…YKKGGVASGF (124 aa). Residues 76–158 form a Gelsolin-like 1 repeat; the sequence is FDLVPVPTNL…VQGFESATFL (83 aa). Y86 is subject to Phosphotyrosine; by SRC; in vitro. G92, D93, E124, D136, G141, and A143 together coordinate Ca(2+). An actin-actin interfilament contact point region spans residues 123-126; the sequence is DESG. 162 to 169 contacts a 1,2-diacyl-sn-glycero-3-phospho-(1D-myo-inositol-4,5-bisphosphate); that stretch reads KSGLKYKK. Residue V172 coordinates Ca(2+). A 1,2-diacyl-sn-glycero-3-phospho-(1D-myo-inositol-4,5-bisphosphate) is bound at residue 188–196; that stretch reads RLFQVKGRR. One copy of the Gelsolin-like 2 repeat lies at 198 to 270; that stretch reads VRATEVPVSW…SEEGTEPEAM (73 aa). Ca(2+)-binding residues include G213 and D214. An intrachain disulfide couples C215 to C228. E236 is a binding site for Ca(2+). Over residues 247–262 the composition is skewed to basic and acidic residues; the sequence is IRDNERSGRARVHVSE. Positions 247–285 are disordered; that stretch reads IRDNERSGRARVHVSEEGTEPEAMLQVLGPKPALPAGTE. Ca(2+) is bound by residues D286, E329, D330, and E354. The stretch at 317-389 is one Gelsolin-like 3 repeat; the sequence is DENPFAQGAL…LPEGGETPLF (73 aa). Y409 is subject to Phosphotyrosine; by SRC; in vitro. Residues 434-782 are actin-binding, Ca-sensitive; that stretch reads AAQHGMDDDG…LDRAMAELAA (349 aa). The Gelsolin-like 4 repeat unit spans residues 455 to 536; it reads SNKVPVDPAT…VQGKEPAHLM (82 aa). Y465 is subject to Phosphotyrosine; by SRC. Residues G471, D472, E502, D514, G519, P521, and T551 each coordinate Ca(2+). A Gelsolin-like 5 repeat occupies 576–642; that stretch reads TRAVEVLPKA…AEGSEPDGFW (67 aa). K584 is subject to N6-acetyllysine. Residues N591 and D592 each coordinate Ca(2+). At Y603 the chain carries Phosphotyrosine; by SRC; in vitro. Position 614 (E614) interacts with Ca(2+). A Phosphotyrosine; by SRC; in vitro modification is found at Y651. One copy of the Gelsolin-like 6 repeat lies at 681-756; it reads IEEVPGELMQ…VKQGFEPPSF (76 aa). D696, D697, and E719 together coordinate Ca(2+). T742 carries the post-translational modification Phosphothreonine.

Belongs to the villin/gelsolin family. Binds to actin and to fibronectin. Identified in a complex composed of ACTA1, COBL, GSN and TMSB4X. Interacts with the inactive form of EIF2AK2/PKR. Interacts with FLII. Post-translationally, phosphorylation on Tyr-86, Tyr-409, Tyr-465, Tyr-603 and Tyr-651 in vitro is induced in presence of phospholipids. In terms of tissue distribution, phagocytic cells, platelets, fibroblasts, nonmuscle cells, smooth and skeletal muscle cells.

It is found in the cytoplasm. The protein resides in the cytoskeleton. Its subcellular location is the secreted. Its function is as follows. Calcium-regulated, actin-modulating protein that binds to the plus (or barbed) ends of actin monomers or filaments, preventing monomer exchange (end-blocking or capping). It can promote the assembly of monomers into filaments (nucleation) as well as sever filaments already formed. Plays a role in ciliogenesis. This Homo sapiens (Human) protein is Gelsolin (GSN).